The sequence spans 117 residues: Ribonuclease P protein component (117 aa).

It belongs to the RnpA family. Consists of a catalytic RNA component (M1 or rnpB) and a protein subunit.

It catalyses the reaction Endonucleolytic cleavage of RNA, removing 5'-extranucleotides from tRNA precursor.. RNaseP catalyzes the removal of the 5'-leader sequence from pre-tRNA to produce the mature 5'-terminus. It can also cleave other RNA substrates such as 4.5S RNA. The protein component plays an auxiliary but essential role in vivo by binding to the 5'-leader sequence and broadening the substrate specificity of the ribozyme. The sequence is that of Ribonuclease P protein component from Staphylococcus aureus (strain MW2).